Here is a 292-residue protein sequence, read N- to C-terminus: 4-amino-L-phenylalanine/4-methylamino-L-phenylalanine methyltransferase (292 aa).

128 to 132 (CAGPG) provides a ligand contact to S-adenosyl-L-methionine.

The protein belongs to the protein N5-glutamine methyltransferase family.

The enzyme catalyses 4-amino-L-phenylalanine + S-adenosyl-L-methionine = 4-methylamino-L-phenylalanine + S-adenosyl-L-homocysteine + H(+). It carries out the reaction 4-methylamino-L-phenylalanine + S-adenosyl-L-methionine = 4-dimethylamino-L-phenylalanine + S-adenosyl-L-homocysteine + H(+). It functions in the pathway antibiotic biosynthesis. Functionally, involved in pristinamycin I biosynthesis. Catalyzes the SAM-dependent methylation of 4-amino-L-phenylalanine (PAPA) to 4-methylamino-L-phenylalanine (MMPAPA), and of MMPAPA to 4-dimethylamino-L-phenylalanine (DMPAPA). This is 4-amino-L-phenylalanine/4-methylamino-L-phenylalanine methyltransferase from Streptomyces pristinaespiralis.